Here is a 434-residue protein sequence, read N- to C-terminus: 5-methylthioadenosine/S-adenosylhomocysteine deaminase (434 aa).

Residues histidine 66 and histidine 68 each contribute to the Zn(2+) site. Substrate-binding residues include glutamate 95, arginine 148, and histidine 188. A Zn(2+)-binding site is contributed by histidine 215. Substrate-binding residues include glutamate 218 and aspartate 304. Aspartate 304 is a Zn(2+) binding site.

The protein belongs to the metallo-dependent hydrolases superfamily. MTA/SAH deaminase family. Requires Zn(2+) as cofactor.

It catalyses the reaction S-adenosyl-L-homocysteine + H2O + H(+) = S-inosyl-L-homocysteine + NH4(+). It carries out the reaction S-methyl-5'-thioadenosine + H2O + H(+) = S-methyl-5'-thioinosine + NH4(+). Functionally, catalyzes the deamination of 5-methylthioadenosine and S-adenosyl-L-homocysteine into 5-methylthioinosine and S-inosyl-L-homocysteine, respectively. Is also able to deaminate adenosine. This is 5-methylthioadenosine/S-adenosylhomocysteine deaminase from Shouchella clausii (strain KSM-K16) (Alkalihalobacillus clausii).